Here is a 445-residue protein sequence, read N- to C-terminus: Ribosomal protein uS12 methylthiotransferase RimO (445 aa).

An MTTase N-terminal domain is found at 10–120; it reads PKVGFVSLGC…VVNAVHEVVP (111 aa). Residues C19, C55, C84, C153, C157, and C160 each contribute to the [4Fe-4S] cluster site. The 240-residue stretch at 139-378 folds into the Radical SAM core domain; that stretch reads LTPRHYAYLK…AHQQEISSAR (240 aa). In terms of domain architecture, TRAM spans 380–445; it reads QQRIGKEIEV…DEYDLWAETL (66 aa).

This sequence belongs to the methylthiotransferase family. RimO subfamily. [4Fe-4S] cluster serves as cofactor.

The protein resides in the cytoplasm. It catalyses the reaction L-aspartate(89)-[ribosomal protein uS12]-hydrogen + (sulfur carrier)-SH + AH2 + 2 S-adenosyl-L-methionine = 3-methylsulfanyl-L-aspartate(89)-[ribosomal protein uS12]-hydrogen + (sulfur carrier)-H + 5'-deoxyadenosine + L-methionine + A + S-adenosyl-L-homocysteine + 2 H(+). Its function is as follows. Catalyzes the methylthiolation of an aspartic acid residue of ribosomal protein uS12. This chain is Ribosomal protein uS12 methylthiotransferase RimO, found in Pseudomonas fluorescens (strain ATCC BAA-477 / NRRL B-23932 / Pf-5).